A 117-amino-acid polypeptide reads, in one-letter code: Movement protein TGB2 (117 aa).

Residues 1 to 11 (MPLIPPPNPQK) are Cytoplasmic-facing. Residues 12 to 32 (TYQIAVLALGLVLLLAFVLIS) traverse the membrane as a helical segment. Residues 33-78 (DHSPKVGDHLHNLPFGGEYKDGTKTIKYFQRPNQHSLSKTLAKSHN) lie on the Lumenal side of the membrane. Residues 79 to 99 (TTIFLIILGLIGTLHGLHYFS) form a helical membrane-spanning segment. Over 100-117 (NNRRISSSLHCVLCQNKH) the chain is Cytoplasmic.

This sequence belongs to the Tymovirales TGBp2 protein family.

It is found in the host endoplasmic reticulum membrane. Functionally, plays a role in viral cell-to-cell propagation, by facilitating genome transport to neighboring plant cells through plasmosdesmata,. The protein is Movement protein TGB2 of Trifolium (WCMV).